A 567-amino-acid chain; its full sequence is MAQTRAWKSIMPLESLPGWLNAVVWGLLLLFCQVQGQDSASPIRNTHTGQVRGSFVHVKDTKSGVHTFLGIPFAKPPIGPLRFAPPEPPEPWSGVRDGTSHPAMCLQNIDGLNLENLKIKMSRSPVSMSEDCLYLSIYTPAHTHKDSNLPVMVWIHGGGLCWGMASTYDGSMLAAIEDVVVVTIQYRLGILGFFSTGDEHARGNWGYLDQVAALRWVQQNIVHFGGNPDRVTIFGESAGGISVSSHVVSPMSQGLFHGAIMESGVALLPNLISNTSEVIYTMVANLSGCEPVDSEALMSCLREKSEEEMLAINNIVRTISGVVDGKFLPRHPLELLASVDFHPVPSIIGINSDEYGWIIPMLHPDSTMKEINRETMRAVLKNTAVQMMLPPECSDLLMEEYMGDTEDSKTLQIQFNEMMGDFIFVIPALQVAHFQRSHAPVYFYEFQHQSNFLKDIRPPHVKADHGDELPYVIGYLFWDMKFVFTEEEKLLSRKMIKYWANFARHGNPNSEGLPYWPALDHDEQYLQLDIQPVVGRALKARRLKFWTKTLPQKIQELKGSQDNHTEL.

An N-terminal signal peptide occupies residues 1-36 (MAQTRAWKSIMPLESLPGWLNAVVWGLLLLFCQVQG). Residue Gln37 is modified to Pyrrolidone carboxylic acid. The cysteines at positions 105 and 132 are disulfide-linked. Ser237 functions as the Acyl-ester intermediate in the catalytic mechanism. An intrachain disulfide couples Cys289 to Cys300. Residues Glu354 and His465 each act as charge relay system in the active site.

The protein belongs to the type-B carboxylesterase/lipase family. Expressed in liver.

The protein resides in the microsome. The catalysed reaction is all-trans-retinyl hexadecanoate + H2O = all-trans-retinol + hexadecanoate + H(+). It carries out the reaction (-)-trans-permethrin + H2O = (3-phenoxyphenyl)methanol + (1S,3R)-3-(2,2-dichlorovinyl)-2,2-dimethylcyclopropanecarboxylate + H(+). In terms of biological role, carboxylesterase that catalyzes the hydrolysis of pyrethroids pesticides. Hydrolyzes trans-permethrin at a rate about 22-fold higher than cis-permethrin. Also hydrolyzes trans-cypermethrin. Hydrolyzes retinyl esters. This chain is Pyrethroid hydrolase Ces2e, found in Rattus norvegicus (Rat).